The chain runs to 764 residues: 5-methyltetrahydropteroyltriglutamate--homocysteine methyltransferase (764 aa).

5-methyltetrahydropteroyltri-L-glutamate-binding positions include 16 to 19 and lysine 121; that span reads RELK. Residues 440–442 and glutamate 493 each bind L-homocysteine; that span reads IGS. L-methionine-binding positions include 440–442 and glutamate 493; that span reads IGS. Residues 524–525 and tryptophan 570 each bind 5-methyltetrahydropteroyltri-L-glutamate; that span reads RC. Aspartate 608 serves as a coordination point for L-homocysteine. Aspartate 608 is a binding site for L-methionine. Glutamate 614 lines the 5-methyltetrahydropteroyltri-L-glutamate pocket. Positions 650, 652, and 674 each coordinate Zn(2+). The active-site Proton donor is histidine 703. Residue cysteine 735 coordinates Zn(2+).

The protein belongs to the vitamin-B12 independent methionine synthase family. Requires Zn(2+) as cofactor.

The catalysed reaction is 5-methyltetrahydropteroyltri-L-glutamate + L-homocysteine = tetrahydropteroyltri-L-glutamate + L-methionine. It participates in amino-acid biosynthesis; L-methionine biosynthesis via de novo pathway; L-methionine from L-homocysteine (MetE route): step 1/1. Catalyzes the transfer of a methyl group from 5-methyltetrahydrofolate to homocysteine resulting in methionine formation. This Burkholderia orbicola (strain MC0-3) protein is 5-methyltetrahydropteroyltriglutamate--homocysteine methyltransferase.